The following is a 205-amino-acid chain: LexA repressor (205 aa).

A DNA-binding region (H-T-H motif) is located at residues 28–48 (RAELMRAFDFRSPNAAESHLR). Active-site for autocatalytic cleavage activity residues include Ser120 and Lys159.

This sequence belongs to the peptidase S24 family. In terms of assembly, homodimer.

It catalyses the reaction Hydrolysis of Ala-|-Gly bond in repressor LexA.. Functionally, represses a number of genes involved in the response to DNA damage (SOS response), including recA and lexA. In the presence of single-stranded DNA, RecA interacts with LexA causing an autocatalytic cleavage which disrupts the DNA-binding part of LexA, leading to derepression of the SOS regulon and eventually DNA repair. This Acidithiobacillus ferrooxidans (strain ATCC 23270 / DSM 14882 / CIP 104768 / NCIMB 8455) (Ferrobacillus ferrooxidans (strain ATCC 23270)) protein is LexA repressor.